A 997-amino-acid polypeptide reads, in one-letter code: Protein Smaug (997 aa).

Positions 1-37 (MKYATGTDNAMTSGISGQTNNSNSASTEMQPTTSTPT) are enriched in polar residues. 2 disordered regions span residues 1 to 69 (MKYA…QSQP) and 329 to 370 (LCPA…GSSS). 2 stretches are compositionally biased toward low complexity: residues 44 to 69 (TPTATTTATYANGNPNPNANPSQSQP) and 329 to 338 (LCPASGSRSS). A phosphoserine mark is found at Ser-564 and Ser-575. An interaction with cup region spans residues 583-763 (EFKPNYIKFH…KDLKFKLSKM (181 aa)). The 55-residue stretch at 600-654 (GIGLWLKSLRLHKYIELFKNMTYEEMLLITEDFLQSVGVTKGASHKLALCIEKLK) folds into the SAM domain. 2 disordered regions span residues 773–892 (HVKP…MQQM) and 944–972 (GSSDNLGLERNQQPQQQQRKLSGGVTSAE). Polar residues-rich tracts occupy residues 802–822 (NGSNDRINNRKNSNDMLNFSL) and 854–864 (HQPQYKSSSYP). The residue at position 970 (Ser-970) is a Phosphoserine.

Belongs to the SMAUG family. In terms of assembly, interacts with oskar (osk). Binds to the 3'-UTR of nos. Interacts with cup, which in turn recruits eIF4-E, leading to an indirect interaction between smg and eIF4-E that prevents mRNA translation.

It is found in the cytoplasm. Translation regulator that binds to the 3'-UTR of specific mRNAs such as nanos (nos) and prevent their translation. Prevents translation of unlocalized nos in the bulk cytoplasm via the recruitment of cup. The protein is Protein Smaug of Drosophila erecta (Fruit fly).